Here is a 337-residue protein sequence, read N- to C-terminus: tRNA N6-adenosine threonylcarbamoyltransferase (337 aa).

Residues histidine 111 and histidine 115 each contribute to the Fe cation site. Residues 134–138 (LVSGG), aspartate 167, glycine 180, and asparagine 272 contribute to the substrate site. Residue aspartate 300 coordinates Fe cation.

It belongs to the KAE1 / TsaD family. The cofactor is Fe(2+).

It is found in the cytoplasm. The catalysed reaction is L-threonylcarbamoyladenylate + adenosine(37) in tRNA = N(6)-L-threonylcarbamoyladenosine(37) in tRNA + AMP + H(+). In terms of biological role, required for the formation of a threonylcarbamoyl group on adenosine at position 37 (t(6)A37) in tRNAs that read codons beginning with adenine. Is involved in the transfer of the threonylcarbamoyl moiety of threonylcarbamoyl-AMP (TC-AMP) to the N6 group of A37, together with TsaE and TsaB. TsaD likely plays a direct catalytic role in this reaction. This Citrobacter koseri (strain ATCC BAA-895 / CDC 4225-83 / SGSC4696) protein is tRNA N6-adenosine threonylcarbamoyltransferase.